The primary structure comprises 152 residues: Transcriptional regulator MraZ (152 aa).

SpoVT-AbrB domains are found at residues 5–52 (ATLV…PLPE) and 81–124 (ASEC…DETT).

The protein belongs to the MraZ family. As to quaternary structure, forms oligomers.

It localises to the cytoplasm. Its subcellular location is the nucleoid. Its function is as follows. Negatively regulates its own expression and that of the subsequent genes in the proximal part of the division and cell wall (dcw) gene cluster. Acts by binding directly to DNA. May also regulate the expression of genes outside the dcw cluster. This Citrobacter koseri (strain ATCC BAA-895 / CDC 4225-83 / SGSC4696) protein is Transcriptional regulator MraZ.